The following is a 267-amino-acid chain: Glucosamine-6-phosphate deaminase (267 aa).

The active-site Proton acceptor; for enolization step is aspartate 72. Aspartate 141 acts as the For ring-opening step in catalysis. Histidine 143 serves as the catalytic Proton acceptor; for ring-opening step. The active-site For ring-opening step is the glutamate 148.

It belongs to the glucosamine/galactosamine-6-phosphate isomerase family. NagB subfamily. Homohexamer.

It carries out the reaction alpha-D-glucosamine 6-phosphate + H2O = beta-D-fructose 6-phosphate + NH4(+). The protein operates within amino-sugar metabolism; N-acetylneuraminate degradation; D-fructose 6-phosphate from N-acetylneuraminate: step 5/5. Its activity is regulated as follows. Allosterically activated by N-acetylglucosamine 6-phosphate (GlcNAc6P). In terms of biological role, catalyzes the reversible isomerization-deamination of glucosamine 6-phosphate (GlcN6P) to form fructose 6-phosphate (Fru6P) and ammonium ion. The sequence is that of Glucosamine-6-phosphate deaminase from Actinobacillus pleuropneumoniae serotype 5b (strain L20).